The primary structure comprises 456 residues: tRNA modification GTPase MnmE (456 aa).

The (6S)-5-formyl-5,6,7,8-tetrahydrofolate site is built by arginine 25, glutamate 82, and lysine 121. Residues 217-379 (GMKVVIAGRP…LKAHLKSVMG (163 aa)) form the TrmE-type G domain. Asparagine 227 contributes to the K(+) binding site. GTP is bound by residues 227-232 (NAGKSS), 246-252 (TNIAGTT), and 271-274 (DTAG). Serine 231 provides a ligand contact to Mg(2+). Residues threonine 246, isoleucine 248, and threonine 251 each contribute to the K(+) site. Threonine 252 is a Mg(2+) binding site. Position 456 (lysine 456) interacts with (6S)-5-formyl-5,6,7,8-tetrahydrofolate.

Belongs to the TRAFAC class TrmE-Era-EngA-EngB-Septin-like GTPase superfamily. TrmE GTPase family. Homodimer. Heterotetramer of two MnmE and two MnmG subunits. It depends on K(+) as a cofactor.

It localises to the cytoplasm. Functionally, exhibits a very high intrinsic GTPase hydrolysis rate. Involved in the addition of a carboxymethylaminomethyl (cmnm) group at the wobble position (U34) of certain tRNAs, forming tRNA-cmnm(5)s(2)U34. This chain is tRNA modification GTPase MnmE, found in Saccharophagus degradans (strain 2-40 / ATCC 43961 / DSM 17024).